We begin with the raw amino-acid sequence, 209 residues long: Cytidylate kinase (209 aa).

7 to 15 (GPAASGKGT) contacts ATP.

It belongs to the cytidylate kinase family. Type 1 subfamily.

The protein resides in the cytoplasm. The catalysed reaction is CMP + ATP = CDP + ADP. The enzyme catalyses dCMP + ATP = dCDP + ADP. This Afipia carboxidovorans (strain ATCC 49405 / DSM 1227 / KCTC 32145 / OM5) (Oligotropha carboxidovorans) protein is Cytidylate kinase.